A 92-amino-acid chain; its full sequence is MPRSLKKGPFIDLHLLKKVEKAVESGDKKPLRTWSRRSTIFPNMIGLTIAVHNGRQHVPVFVSDEMVGHKLGEFAPTRTYRGHAADKKAKKR.

Belongs to the universal ribosomal protein uS19 family.

In terms of biological role, protein S19 forms a complex with S13 that binds strongly to the 16S ribosomal RNA. This is Small ribosomal subunit protein uS19 from Pectobacterium atrosepticum (strain SCRI 1043 / ATCC BAA-672) (Erwinia carotovora subsp. atroseptica).